The following is an 89-amino-acid chain: MAHKKAGGSSRNGRDSAGQRLGVKKFGGELVIPGNIIVRQRGTKFYPGTNVGMGKDHTLFATAMGKVSFKHKAEGRTFVVVEPLPEAAE.

A disordered region spans residues 1 to 20 (MAHKKAGGSSRNGRDSAGQR).

This sequence belongs to the bacterial ribosomal protein bL27 family.

The polypeptide is Large ribosomal subunit protein bL27 (Paramagnetospirillum magneticum (strain ATCC 700264 / AMB-1) (Magnetospirillum magneticum)).